Reading from the N-terminus, the 362-residue chain is Photosystem II protein D1 3 (362 aa).

Transmembrane regions (helical) follow at residues 29–46 (YVGWFGVLMIPTLLSATI), 118–133 (HFLIGVFCYLGREWEL), and 142–156 (WICIAYSAPVAAATA). H118 contacts chlorophyll a. Y126 is a pheophytin a binding site. [CaMn4O5] cluster-binding residues include D170 and E189. A helical transmembrane segment spans residues 197–218 (FHMLGVAGVFGGALISAMHGSL). Position 198 (H198) interacts with chlorophyll a. Residues H215 and 264–265 (AF) each bind a quinone. Residue H215 coordinates Fe cation. H274 provides a ligand contact to Fe cation. A helical transmembrane segment spans residues 276 to 290 (IMAAFPVIGIWFTSL). [CaMn4O5] cluster is bound by residues H334, E335, D344, and A346. The propeptide occupies 347–362 (GTESAPVAVSTAKVGG).

Belongs to the reaction center PufL/M/PsbA/D family. PSII is composed of 1 copy each of membrane proteins PsbA, PsbB, PsbC, PsbD, PsbE, PsbF, PsbH, PsbI, PsbJ, PsbK, PsbL, PsbM, PsbT, PsbX, Psb30/Ycf12, peripheral proteins PsbO, CyanoQ (PsbQ), PsbU, PsbV and a large number of cofactors. It forms dimeric complexes. The cofactor is The D1/D2 heterodimer binds P680, chlorophylls that are the primary electron donor of PSII, and subsequent electron acceptors. It shares a non-heme iron and each subunit binds pheophytin, quinone, additional chlorophylls, carotenoids and lipids. D1 provides most of the ligands for the Mn4-Ca-O5 cluster of the oxygen-evolving complex (OEC). There is also a Cl(-1) ion associated with D1 and D2, which is required for oxygen evolution. The PSII complex binds additional chlorophylls, carotenoids and specific lipids.. In terms of processing, tyr-161 forms a radical intermediate that is referred to as redox-active TyrZ, YZ or Y-Z. C-terminally processed by CtpA; processing is essential to allow assembly of the oxygen-evolving complex and thus photosynthetic growth.

Its subcellular location is the cell inner membrane. It carries out the reaction 2 a plastoquinone + 4 hnu + 2 H2O = 2 a plastoquinol + O2. Its function is as follows. Photosystem II (PSII) is a light-driven water:plastoquinone oxidoreductase that uses light energy to abstract electrons from H(2)O, generating O(2) and a proton gradient subsequently used for ATP formation. It consists of a core antenna complex that captures photons, and an electron transfer chain that converts photonic excitation into a charge separation. The D1/D2 (PsbA/PsbD) reaction center heterodimer binds P680, the primary electron donor of PSII as well as several subsequent electron acceptors. This chain is Photosystem II protein D1 3, found in Gloeobacter violaceus (strain ATCC 29082 / PCC 7421).